The following is a 345-amino-acid chain: Putative [LysW]-L-2-aminoadipate/[LysW]-L-glutamate phosphate reductase (345 aa).

11 to 14 (SGFT) is a binding site for NADP(+). Residues 34–56 (TSRSKENKTIGHSHPNLRHSDLR) form a disordered region. Cys146 is an active-site residue. Asn309 provides a ligand contact to NADP(+).

The protein belongs to the NAGSA dehydrogenase family. Type 1 subfamily. LysY sub-subfamily.

Its subcellular location is the cytoplasm. It carries out the reaction [amino-group carrier protein]-C-terminal-N-(1-carboxy-5-oxopentan-1-yl)-L-glutamine + phosphate + NADP(+) = [amino-group carrier protein]-C-terminal-N-(1-carboxy-5-phosphooxy-5-oxopentan-1-yl)-L-glutamine + NADPH + H(+). The catalysed reaction is [amino-group carrier protein]-C-terminal-gamma-(L-glutamyl-5-semialdehyde)-L-glutamate + phosphate + NADP(+) = [amino-group carrier protein]-C-terminal-gamma-(5-phospho-L-glutamyl)-L-glutamate + NADPH + H(+). Its pathway is amino-acid biosynthesis; L-lysine biosynthesis via AAA pathway; L-lysine from L-alpha-aminoadipate (Thermus route): step 3/5. It participates in amino-acid biosynthesis; L-arginine biosynthesis. Functionally, involved in both the arginine and lysine biosynthetic pathways. This is Putative [LysW]-L-2-aminoadipate/[LysW]-L-glutamate phosphate reductase from Haloarcula marismortui (strain ATCC 43049 / DSM 3752 / JCM 8966 / VKM B-1809) (Halobacterium marismortui).